A 2116-amino-acid chain; its full sequence is Non-structural polyprotein p200 (2116 aa).

The segment at 36–49 (EVRDVVSAAQKRAI) is required for efficient proteolysis and P150-P90 interaction. Residues 57–247 (VFTQMQVSDH…TRPCTTRIYQ (191 aa)) form the Alphavirus-like MT domain. Over residues 712–723 (AGPGQSAATSSP) the composition is skewed to low complexity. The interval 712–782 (AGPGQSAATS…PTSAGPADRA (71 aa)) is disordered. 3 short sequence motifs (pxxPxR; class II SH3-binding) span residues 727-732 (PPPPRC), 747-752 (PPAPAR), and 761-766 (PPAPPR). Pro residues predominate over residues 745 to 775 (TPPPAPARDPPPPAPSPPAPPRAGDPVPPTS). Residues 806-985 (SDIVESYARA…LTHASVLVGA (180 aa)) form the Macro domain. The disordered stretch occupies residues 992–1031 (VSPPPTEPLASCPAGDPGRPAQRSASPPATPLGDATAPEP). Positions 1000-1301 (LASCPAGDPG…WLAVPLSRGG (302 aa)) constitute a Peptidase C27 domain. The active-site For cysteine protease activity is cysteine 1152. Positions 1152 to 1183 (CWLRAAANVAQAARACGAYTSAGCPRCAYGRA) are interaction with host CALM1. The Zn(2+) site is built by cysteine 1175, cysteine 1178, cysteine 1227, and histidine 1273. The segment at 1193–1228 (FAALSQRWSASHADASSDGTGDPLDPLMETVGCACS) is EF-hand-like. Histidine 1273 acts as the For cysteine protease activity in catalysis. The (+)RNA virus helicase ATP-binding domain maps to 1320-1468 (EVRRLGDDAM…VPDRWPTERS (149 aa)). 1352-1359 (MAAGAGKT) provides a ligand contact to a ribonucleoside 5'-triphosphate. Residues 1469-1609 (RHTWRFPDCW…ELKEVPAGID (141 aa)) enclose the (+)RNA virus helicase C-terminal domain. The involved in P150-P90 interaction stretch occupies residues 1700–1900 (YRAGEDGSTL…VELEISAALL (201 aa)). In terms of domain architecture, RdRp catalytic spans 1870 to 1981 (TNAIEVDFTE…FLPEGARSAA (112 aa)). The Human RB1 binding motif lies at 1902–1906 (LPCAE).

As to quaternary structure, interacts with RNA-directed RNA polymerase p90. Interacts with host CALM1; this interaction is necessary for the protease activity and viral infectivity. Interacts with host C1QBP. Interacts with the capsid protein. In terms of assembly, interacts with human RB1/retinoblastoma protein. Interacts with protease/methyltransferase p150. The cofactor is Zn(2+). In terms of processing, specific enzymatic cleavage by its own cysteine protease yield mature proteins p150 and p90.

The protein resides in the host membrane. It is found in the host cytoplasm. Its subcellular location is the host perinuclear region. The enzyme catalyses RNA(n) + a ribonucleoside 5'-triphosphate = RNA(n+1) + diphosphate. It carries out the reaction a ribonucleoside 5'-triphosphate + H2O = a ribonucleoside 5'-diphosphate + phosphate + H(+). It catalyses the reaction ATP + H2O = ADP + phosphate + H(+). In terms of biological role, probable principal replicase for the negative-strand DNA, which replicates the 40S (+) genomic RNA into (-) antigenomic RNA. It cannot replicate the (-) into (+) until cleaved into p150 and p90 mature proteins. Protease that cleaves the precursor polyprotein into two mature products. Together with RNA-directed RNA polymerase p90, replicates the 40S genomic and antigenomic RNA by recognizing replications specific signals. The heterodimer P150/p90 is probably the principal replicase for positive-strand genomic RNA and the 24S subgenomic RNA, which codes for structural proteins. Responsible for the mRNA-capping of the viral mRNAs. This function is necessary since all viral RNAs are synthesized in the cytoplasm, and host capping enzymes are restricted to the nucleus. Forms fibers late in the infection that may be involved in cell-to-cell spread of the virus RNA in the absence of virus particle formation. Functionally, together with protease/methyltransferase p150, replicates the 40S genomic and antigenomic RNA by recognizing replications specific signals. The heterodimer P150/p90 is probably the principal replicase for positive-strand genomic RNA and the 24S subgenomic RNA, which codes for structural proteins. A helicase activity is probably also present. The sequence is that of Non-structural polyprotein p200 from Homo sapiens (Human).